The following is a 527-amino-acid chain: Tyrosine-protein kinase TXK (527 aa).

The tract at residues Thr58–Pro81 is disordered. Residues Asp82 to Leu142 enclose the SH3 domain. Tyr91 carries the post-translational modification Phosphotyrosine; by autocatalysis. An SH2 domain is found at Trp150–Ile246. In terms of domain architecture, Protein kinase spans Leu271–Trp527. ATP-binding positions include Ile277–Val285 and Lys299. Asp390 functions as the Proton acceptor in the catalytic mechanism. Tyr420 carries the post-translational modification Phosphotyrosine; by FYN and autocatalysis.

Belongs to the protein kinase superfamily. Tyr protein kinase family. TEC subfamily. In terms of assembly, interacts with PARP1 and EEF1A1. Interacts with SH2D2A. Interacts with FYN. Phosphorylated at Tyr-420 by FYN. Autophosphorylation at Tyr-91 is critical for the activation of TXK, leading to the up-regulation of IFN-gamma gene transcription. In terms of processing, the cysteine string at the N-terminus is palmitoylated and required for the proper subcellular location. As to expression, expressed in early thymocytes, T-cells and mast cells.

Its subcellular location is the cytoplasm. It is found in the nucleus. The protein localises to the cell membrane. The catalysed reaction is L-tyrosyl-[protein] + ATP = O-phospho-L-tyrosyl-[protein] + ADP + H(+). Its activity is regulated as follows. Activated by phosphorylation by FYN. Non-receptor tyrosine kinase that plays a redundant role with ITK in regulation of the adaptive immune response. Regulates the development, function and differentiation of conventional T-cells and nonconventional NKT-cells. When antigen presenting cells (APC) activate T-cell receptor (TCR), a series of phosphorylation leads to the recruitment of TXK to the cell membrane, where it is phosphorylated at Tyr-420. Phosphorylation leads to TXK full activation. Also contributes to signaling from many receptors and participates in multiple downstream pathways, including regulation of the actin cytoskeleton. Like ITK, can phosphorylate PLCG1, leading to its localization in lipid rafts and activation, followed by subsequent cleavage of its substrates. In turn, the endoplasmic reticulum releases calcium in the cytoplasm and the nuclear activator of activated T-cells (NFAT) translocates into the nucleus to perform its transcriptional duty. Plays a role in the positive regulation of IFNG transcription in T-helper 1 cells as part of an IFNG promoter-binding complex with PARP1 and EEF1A1. Within the complex, phosphorylates both PARP1 and EEF1A1. Also phosphorylates key sites in LCP2 leading to the up-regulation of Th1 preferred cytokine IL-2. Phosphorylates 'Tyr-201' of CTLA4 which leads to the association of PI-3 kinase with the CTLA4 receptor. In Mus musculus (Mouse), this protein is Tyrosine-protein kinase TXK (Txk).